The primary structure comprises 92 residues: Small ribosomal subunit protein uS19 (92 aa).

The protein belongs to the universal ribosomal protein uS19 family.

In terms of biological role, protein S19 forms a complex with S13 that binds strongly to the 16S ribosomal RNA. The sequence is that of Small ribosomal subunit protein uS19 from Polaromonas naphthalenivorans (strain CJ2).